We begin with the raw amino-acid sequence, 308 residues long: Maspardin (308 aa).

The AB hydrolase-1 domain maps to F87–M159. S304 is subject to Phosphoserine.

This sequence belongs to the AB hydrolase superfamily. Interacts with CD4. Interacts with ALDH16A1. Expressed in cell lines FT.1 and in a L cell fibroblast derivative (at protein level).

The protein localises to the cytoplasm. Its function is as follows. May play a role as a negative regulatory factor in CD4-dependent T-cell activation. This is Maspardin (Spg21) from Mus musculus (Mouse).